The following is a 220-amino-acid chain: Phosphopantothenoylcysteine decarboxylase (220 aa).

FMN contacts are provided by residues 29–31 (GSV) and 54–56 (TKA). H91 (proton donor) is an active-site residue. FMN contacts are provided by residues 107-110 (SANT) and A141. N-[(R)-4-phosphopantothenoyl]-L-cysteine contacts are provided by N143, R173, and A175. Catalysis depends on C176, which acts as the Proton donor. N-[(R)-4-phosphopantothenoyl]-L-cysteine is bound at residue M184.

The protein belongs to the HFCD (homooligomeric flavin containing Cys decarboxylase) superfamily. As to quaternary structure, forms homotrimers. Interacts with HIP1. Interacts with HD1 in the dark. FMN is required as a cofactor. As to expression, expressed in root meristem, shoot apical meristem (SAM), intercalary meristem, floral meristem, embryo and tip of the coleoptile before true leaf emergence.

The protein localises to the nucleus. The enzyme catalyses N-[(R)-4-phosphopantothenoyl]-L-cysteine + H(+) = (R)-4'-phosphopantetheine + CO2. It participates in cofactor biosynthesis; coenzyme A biosynthesis; CoA from (R)-pantothenate: step 3/5. Functionally, catalyzes the decarboxylation of 4'-phosphopantothenoylcysteine to 4'-phosphopantetheine, a key step in coenzyme A biosynthesis. Involved in salt and osmotic tolerance, and light-regulated plant growth. Trimerization of HAL3 recruits and activates the E3 ubiquitin-protein ligase HIP1, which leads to the degradation of cell cycle suppressors, resulting in enhancement of cell division and plant growth. HAL3 function in cell division seems to be independent from its PPC decarboxylase activity. Acts as a positive regulator of flowering by binding to HD1 in the dark. The chain is Phosphopantothenoylcysteine decarboxylase from Oryza sativa subsp. japonica (Rice).